The chain runs to 431 residues: Synaptotagmin-11 (431 aa).

The Vesicular portion of the chain corresponds to 1-15 (MAEITNIRPSFDVSP). The chain crosses the membrane as a helical span at residues 16 to 36 (VVAGLIGASVLVVCVSVTVFV). The Cytoplasmic segment spans residues 37 to 431 (WSCCHQQAEK…VAKWHSLSEY (395 aa)). At S134 the chain carries Phosphoserine. Positions 134–154 (SPITSLTPGESKTTSPSSPEE) are disordered. The segment covering 140–151 (TPGESKTTSPSS) has biased composition (low complexity). 2 consecutive C2 domains span residues 157-279 (MLGS…QLTR) and 291-426 (SRGE…AKWH). The Ca(2+) site is built by D250, S253, and D256.

Belongs to the synaptotagmin family. Homodimer. Can also form heterodimers. Interacts with PRKN. Interacts (via C2 2 domain) with AGO2 and SND1; the interaction with SND1 is direct. Interacts with KIF1A; the interaction increases in presence of calcium. The cofactor is Ca(2+). In terms of processing, ubiquitinated, at least by PRKN, and targeted to the proteasome complex for degradation. Ubiquitination is inhibited by ATP13A2.

It is found in the cytoplasmic vesicle membrane. Its subcellular location is the perikaryon. It localises to the golgi apparatus. The protein resides in the trans-Golgi network membrane. The protein localises to the recycling endosome membrane. It is found in the lysosome membrane. Its subcellular location is the cytoplasmic vesicle. It localises to the phagosome. The protein resides in the cell projection. The protein localises to the axon. It is found in the dendrite. Its subcellular location is the postsynaptic density. It localises to the clathrin-coated vesicle membrane. Synaptotagmin family member involved in vesicular and membrane trafficking which does not bind Ca(2+). Inhibits clathrin-mediated and bulk endocytosis, functions to ensure precision in vesicle retrieval. Plays an important role in dopamine transmission by regulating endocytosis and the vesicle-recycling process. Essential component of a neuronal vesicular trafficking pathway that differs from the synaptic vesicle trafficking pathway but is crucial for development and synaptic plasticity. In macrophages and microglia, inhibits the conventional cytokine secretion, of at least IL6 and TNF, and phagocytosis. In astrocytes, regulates lysosome exocytosis, mechanism required for the repair of injured astrocyte cell membrane. Required for the ATP13A2-mediated regulation of the autophagy-lysosome pathway. This is Synaptotagmin-11 from Homo sapiens (Human).